The following is a 1137-amino-acid chain: Dendrite extension defective protein 1 (1137 aa).

The N-terminal stretch at 1–41 is a signal peptide; that stretch reads MLAHTHRINKCLYGQNQMRNRHALLGALPPIFLLLLPLISC. Over 43 to 1005 the chain is Extracellular; the sequence is KFDPERIAAR…HAEEQSPRLA (963 aa). Residues 163 to 302 form the NIDO 1 domain; the sequence is PFWNRNDLRN…GEWMFELSEL (140 aa). Asparagine 240 and asparagine 416 each carry an N-linked (GlcNAc...) asparagine glycan. Residues 409-450 enclose the EGF-like; calcium-binding domain; that stretch reads DVDECKTNSTICHKNAICTNTPGRYFCMCKEGFSGDGQNDCS. 3 disulfides stabilise this stretch: cysteine 413-cysteine 426, cysteine 420-cysteine 435, and cysteine 437-cysteine 449. An NIDO 2 domain is found at 519–659; that stretch reads PFFGPIDLSR…GTWLYRIDKA (141 aa). A glycan (N-linked (GlcNAc...) asparagine) is linked at asparagine 571. A compositionally biased stretch (polar residues) spans 738–749; that stretch reads IGNQQRQQTTKA. 5 disordered regions span residues 738–765, 795–856, 878–897, 906–933, and 978–998; these read IGNQ…HRPI, FRPN…PFEA, QTTK…EDLS, TEED…TKAH, and NSQP…GHAE. Asparagine 756 is a glycosylation site (N-linked (GlcNAc...) asparagine). A compositionally biased stretch (polar residues) spans 798-809; sequence NQRNGVQKSTQR. Residues 819–833 show a composition bias toward basic and acidic residues; sequence PLKEEATTSVPREKT. Acidic residues predominate over residues 906 to 915; sequence TEEDEEEAEI. The segment covering 916 to 933 has biased composition (low complexity); that stretch reads STETTTEMSSTTTTTKAH. Over residues 978 to 992 the composition is skewed to polar residues; it reads NSQPPKQRNDNQPTV. A helical membrane pass occupies residues 1006–1026; that stretch reads ILLPVMIILAWLVILVCIGAV. The Cytoplasmic portion of the chain corresponds to 1027-1037; the sequence is VCCKRRNSRES. Residues 1106–1125 form a disordered region; it reads ARLSTQERQSPPSFVNNGYT.

Post-translationally, may be proteolytically cleaved and secreted.

Its subcellular location is the membrane. The protein localises to the cell projection. The protein resides in the dendrite. It is found in the secreted. Its function is as follows. Along with dyf-7, enables neurite growth and maintenance by anchoring amphid dendritic tips during neuron cell body migration in embryonic and larval development. Promotes seam cell remodeling during the dauer phase. Plays a role in positively regulating locomotion during the dauer phase. The protein is Dendrite extension defective protein 1 of Caenorhabditis elegans.